We begin with the raw amino-acid sequence, 226 residues long: Urease accessory protein UreF (226 aa).

It belongs to the UreF family. In terms of assembly, ureD, UreF and UreG form a complex that acts as a GTP-hydrolysis-dependent molecular chaperone, activating the urease apoprotein by helping to assemble the nickel containing metallocenter of UreC. The UreE protein probably delivers the nickel.

The protein localises to the cytoplasm. Functionally, required for maturation of urease via the functional incorporation of the urease nickel metallocenter. This is Urease accessory protein UreF from Burkholderia cenocepacia (strain ATCC BAA-245 / DSM 16553 / LMG 16656 / NCTC 13227 / J2315 / CF5610) (Burkholderia cepacia (strain J2315)).